A 130-amino-acid chain; its full sequence is Serum amyloid A-4 protein (130 aa).

The first 18 residues, 1-18, serve as a signal peptide directing secretion; sequence MRLFTGIVFCSLVMGVTS. Asparagine 94 carries N-linked (GlcNAc...) asparagine; partial glycosylation. The segment at 101-130 is disordered; it reads DSKSNEKAEEWGRSGKDPDRFRPDGLPKKY.

This sequence belongs to the SAA family. Apolipoprotein of the HDL complex. In terms of tissue distribution, expressed by the liver; secreted in plasma.

The protein localises to the secreted. Its function is as follows. Major acute phase reactant. The polypeptide is Serum amyloid A-4 protein (Homo sapiens (Human)).